Here is a 364-residue protein sequence, read N- to C-terminus: Melatonin receptor type 1B (364 aa).

Residues 1-42 (MPENSSIPNCCEASGLAARPSWSGSAGARPPVTARAPWVAPM) are Extracellular-facing. Asparagine 4 carries an N-linked (GlcNAc...) asparagine glycan. The chain crosses the membrane as a helical span at residues 43 to 63 (LSTVVVVTTAVDFVGNLLVIL). Residues 64-76 (SVLRNRKLRNAGN) are Cytoplasmic-facing. The helical transmembrane segment at 77–97 (LFVVSLALADLVIALYPYPLI) threads the bilayer. Topologically, residues 98 to 115 (LVAIIRDGWVLGEAHCKA) are extracellular. Cysteine 113 and cysteine 190 are disulfide-bonded. The helical transmembrane segment at 116–136 (SAFVMGLSVIGSVFNITAIAI) threads the bilayer. Topologically, residues 137 to 155 (NRYCCICHSTTYHRVCSHW) are cytoplasmic. The helical transmembrane segment at 156–176 (YTPIYISLVWLLTLVALVPNF) threads the bilayer. Residues 177–200 (FVGSLEYDPRIYSCTFIQTASTQY) are Extracellular-facing. The chain crosses the membrane as a helical span at residues 201–221 (TAAVVAIHFLLPMAVVSFCYL). Over 222 to 253 (RIWVLVLQARRKAKATRKLRLRPSDLRSFLTM) the chain is Cytoplasmic. A helical transmembrane segment spans residues 254 to 274 (FAVFVVFAICWAPLNCIGLAV). Residues 275–287 (AINPEAMALQVPE) are Extracellular-facing. A helical membrane pass occupies residues 288 to 308 (GLFVTSYFLAYFNSCLNAIVY). The Cytoplasmic segment spans residues 309–364 (GLLNQNFRREYKRILLAIWNTRRCIQHASKHCLTEERQGPTPPAARATVPVKEGAL). The disordered stretch occupies residues 343-364 (EERQGPTPPAARATVPVKEGAL). The segment covering 352-364 (AARATVPVKEGAL) has biased composition (low complexity).

This sequence belongs to the G-protein coupled receptor 1 family.

It localises to the cell membrane. In terms of biological role, high affinity receptor for melatonin. The activity of this receptor is mediated by pertussis toxin sensitive G proteins that inhibits adenylate cyclase activity. This is Melatonin receptor type 1B (Mtnr1b) from Mus musculus (Mouse).